The primary structure comprises 293 residues: Meteorin (293 aa).

The first 23 residues, 1-23 (MGFPAAALLCALCCGLLAPAARA), serve as a signal peptide directing secretion. Disulfide bonds link Cys-30–Cys-51, Cys-82–Cys-118, Cys-171–Cys-242, Cys-174–Cys-266, and Cys-184–Cys-288.

Belongs to the meteorin family. Monomer.

The protein resides in the secreted. Functionally, involved in both glial cell differentiation and axonal network formation during neurogenesis. Promotes astrocyte differentiation and transforms cerebellar astrocytes into radial glia. Also induces axonal extension in small and intermediate neurons of sensory ganglia by activating nearby satellite glia. The sequence is that of Meteorin (METRN) from Homo sapiens (Human).